Consider the following 235-residue polypeptide: Ribosomal RNA-processing protein 17 (235 aa).

The stretch at 49-110 (QRQKKAQEFI…AKNDKTEDLQ (62 aa)) forms a coiled coil. The segment covering 99 to 108 (EDAKNDKTED) has biased composition (basic and acidic residues). 2 disordered regions span residues 99 to 138 (EDAK…SVKP) and 209 to 235 (RVKK…KRRR). Serine 113, serine 116, and serine 122 each carry phosphoserine. Residues 217 to 235 (TKNERRINQRKANDNKRRR) are compositionally biased toward basic and acidic residues.

It belongs to the RRP17 family.

It localises to the nucleus. The protein resides in the nucleolus. Its function is as follows. Essential protein involved in ribosomal RNA processing. This Saccharomyces cerevisiae (strain ATCC 204508 / S288c) (Baker's yeast) protein is Ribosomal RNA-processing protein 17 (RRP17).